Here is a 294-residue protein sequence, read N- to C-terminus: Glycine-rich protein 2 (294 aa).

An N-terminal signal peptide occupies residues 1–20; the sequence is MKMWFRLATFVTLIIEFAHC. Residues 205-221 show a composition bias toward low complexity; sequence TGSQTGAAANGTSAGAA. A disordered region spans residues 205 to 225; the sequence is TGSQTGAAANGTSAGAAVRGG.

Nacreous layer of shell (at protein level). Expressed primarily in the mantle with highest level in the mantle pallium and lower level in the mantle edge.

The protein resides in the secreted. This is Glycine-rich protein 2 from Pinctada maxima (Silver-lipped pearl oyster).